A 195-amino-acid chain; its full sequence is NADH-quinone oxidoreductase subunit B (195 aa).

The [4Fe-4S] cluster site is built by Cys74, Cys75, Cys139, and Cys169.

It belongs to the complex I 20 kDa subunit family. As to quaternary structure, NDH-1 is composed of 14 different subunits. Subunits NuoB, C, D, E, F, and G constitute the peripheral sector of the complex. [4Fe-4S] cluster serves as cofactor.

The protein resides in the cell inner membrane. It catalyses the reaction a quinone + NADH + 5 H(+)(in) = a quinol + NAD(+) + 4 H(+)(out). NDH-1 shuttles electrons from NADH, via FMN and iron-sulfur (Fe-S) centers, to quinones in the respiratory chain. The immediate electron acceptor for the enzyme in this species is believed to be ubiquinone. Couples the redox reaction to proton translocation (for every two electrons transferred, four hydrogen ions are translocated across the cytoplasmic membrane), and thus conserves the redox energy in a proton gradient. This is NADH-quinone oxidoreductase subunit B from Methylobacterium sp. (strain 4-46).